Reading from the N-terminus, the 390-residue chain is MSGNSIGKLFSVTSFGESHGPAIGCIVDGCPPGLTLSVEDIQQELDRRKPGTSRHVTQRREADRVEILSGVFENTTTGTPIALLIRNEDQRSKDYSKIMDVFRPGHADYTYWQKYGIRDYRGGGRSSARETAVRVAAGAIARKWLQQRYGIVIRGYMAQLGSIAIPFKSWDVVNQNPFFVADNDYVQKLETFMDSLRKSGNSAGARINVVAEGVPVGWGEPVYDRLDADIAYAMMSINAVKGVEIGAGFNSITQKGTEHSDEITPEGFLSNNAGGILGGISSGQPVVVSVAIKPTSSIRLARRSIDKAGNPVLVETHGRHDPCVGIRATPIVEAMLAIVLMDHALRHRAQNADVVCSTPRIPGSTTNQIHPVEMQASAPRAEDPEPDESS.

R48 and R54 together coordinate NADP(+). Residues 125-127, 238-239, G278, 293-297, and R319 each bind FMN; these read RSS, NA, and KPTSS. The interval 359–390 is disordered; the sequence is PRIPGSTTNQIHPVEMQASAPRAEDPEPDESS.

The protein belongs to the chorismate synthase family. As to quaternary structure, homotetramer. Requires FMNH2 as cofactor.

The catalysed reaction is 5-O-(1-carboxyvinyl)-3-phosphoshikimate = chorismate + phosphate. The protein operates within metabolic intermediate biosynthesis; chorismate biosynthesis; chorismate from D-erythrose 4-phosphate and phosphoenolpyruvate: step 7/7. Catalyzes the anti-1,4-elimination of the C-3 phosphate and the C-6 proR hydrogen from 5-enolpyruvylshikimate-3-phosphate (EPSP) to yield chorismate, which is the branch point compound that serves as the starting substrate for the three terminal pathways of aromatic amino acid biosynthesis. This reaction introduces a second double bond into the aromatic ring system. The protein is Chorismate synthase of Nitrosomonas europaea (strain ATCC 19718 / CIP 103999 / KCTC 2705 / NBRC 14298).